The following is a 141-amino-acid chain: Galactose-6-phosphate isomerase subunit LacA 1 (141 aa).

It belongs to the LacAB/RpiB family. Heteromultimeric protein consisting of LacA and LacB.

It catalyses the reaction aldehydo-D-galactose 6-phosphate = keto-D-tagatose 6-phosphate. The protein operates within carbohydrate metabolism; D-galactose 6-phosphate degradation; D-tagatose 6-phosphate from D-galactose 6-phosphate: step 1/1. In Streptococcus pyogenes serotype M1, this protein is Galactose-6-phosphate isomerase subunit LacA 1.